The following is a 924-amino-acid chain: Protein argonaute 4 (924 aa).

2 disordered regions span residues 1–37 (MDSTNGNGADLESANGANGSGVTEALPPPPPVIPPNV) and 159–185 (TRANGNGSPNGNESPSDGDRKRLRRPN). Positions 26–37 (LPPPPPVIPPNV) are enriched in pro residues. Low complexity predominate over residues 162 to 173 (NGNGSPNGNESP). In terms of domain architecture, PAZ spans 292–408 (PVVDFLIANQ…IPLELCALVP (117 aa)). One can recognise a Piwi domain in the interval 577–885 (FILCVLPDKK…AAAQLGTFMK (309 aa)). The Nuclear localization signal motif lies at 584–591 (DKKNSDLY).

This sequence belongs to the argonaute family. Ago subfamily. Interacts with NRPE1 (via C-terminus). Binding to NRPE1 is required for its function in RdDM. Interacts with turnip crinkle virus (TCV) capsid protein P38; this interaction inhibits probably RNA silencing ability of AGO4. Interacts with SDE3. Binds to RDM3. Binds chromatin at loci subject to transcriptional silencing. Interacts with MBD6. Expressed in embryos, mature leaves, vascular tissue of the sepals, stamens and stigma, at the tip of the style and siliques.

Its subcellular location is the nucleus. It localises to the nucleolus. It is found in the nucleoplasm. The protein localises to the cajal body. Together with RDM3, required for transcriptional gene silencing (TGS) by DNA methylation and repressive histone modifications (H3K9me2) of several chromatin loci. Component of the RISC complex that associate with the small interfering RNA (siRNA) pathway involved in direct cytosine methylation at endogenous DNA repeats. Forms a AGO4/NRPE1/siRNA complex in cajal body, facilitating its function in RNA-directed gene silencing of target loci. Required for CpNpG and asymmetric DNA methylation as well as histone H3 'Lys-9' methylation (H3K9me) at SUP and SN1 loci. May be not required for CpG methylation. Required for the production and maintenance of retrotransposon SN1 and Copia and ribosomal 5S 25 nucleotide siRNAs specialized in gene silencing at chromatin level. Involved in de novo methylation of FWA gene and required for the maintenance of RNA-directed DNA methylation (RdDM) triggered by inverted repeat transgenes. Interacts with miRNA miR390 and miR172, targeting respectively TAS3 and AP2 mRNAs, and mediates cleavage of miRNA targets. Associates mainly with small RNAs of 24 nucleotide in length and preferentially recruits small RNAs with a 5' terminal adenosine. Targeted by the turnip yellows virus (TuYV) protein P0 (via F-box-like domain) for probable proteasome degradation and thereby inactivating AGO4 function in RNA silencing. Required for resistance to the bacterial pathogen P.syringae. Works independently of the RdDM pathway in mediating resistance to P.syringae. RdDM is involved in viral genome methylation as an epigenetic defense against geminiviruses. This is Protein argonaute 4 from Arabidopsis thaliana (Mouse-ear cress).